We begin with the raw amino-acid sequence, 255 residues long: 4-diphosphocytidyl-2-C-methyl-D-erythritol kinase (255 aa).

K9 is an active-site residue. An ATP-binding site is contributed by 95–105; it reads PSQAGLGGGSS. Residue D137 is part of the active site.

Belongs to the GHMP kinase family. IspE subfamily.

It catalyses the reaction 4-CDP-2-C-methyl-D-erythritol + ATP = 4-CDP-2-C-methyl-D-erythritol 2-phosphate + ADP + H(+). It functions in the pathway isoprenoid biosynthesis; isopentenyl diphosphate biosynthesis via DXP pathway; isopentenyl diphosphate from 1-deoxy-D-xylulose 5-phosphate: step 3/6. In terms of biological role, catalyzes the phosphorylation of the position 2 hydroxy group of 4-diphosphocytidyl-2C-methyl-D-erythritol. This is 4-diphosphocytidyl-2-C-methyl-D-erythritol kinase from Sulfurovum sp. (strain NBC37-1).